Here is a 185-residue protein sequence, read N- to C-terminus: Peptidyl-tRNA hydrolase (185 aa).

TRNA is bound at residue Y14. H19 functions as the Proton acceptor in the catalytic mechanism. TRNA contacts are provided by F64, N66, and N112.

It belongs to the PTH family. Monomer.

It localises to the cytoplasm. It carries out the reaction an N-acyl-L-alpha-aminoacyl-tRNA + H2O = an N-acyl-L-amino acid + a tRNA + H(+). Its function is as follows. Hydrolyzes ribosome-free peptidyl-tRNAs (with 1 or more amino acids incorporated), which drop off the ribosome during protein synthesis, or as a result of ribosome stalling. In terms of biological role, catalyzes the release of premature peptidyl moieties from peptidyl-tRNA molecules trapped in stalled 50S ribosomal subunits, and thus maintains levels of free tRNAs and 50S ribosomes. The protein is Peptidyl-tRNA hydrolase of Levilactobacillus brevis (strain ATCC 367 / BCRC 12310 / CIP 105137 / JCM 1170 / LMG 11437 / NCIMB 947 / NCTC 947) (Lactobacillus brevis).